The primary structure comprises 1023 residues: Exportin-T (1023 aa).

The protein belongs to the exportin family.

Its subcellular location is the nucleus. It is found in the cytoplasm. TRNA nucleus export receptor which facilitates tRNA translocation across the nuclear pore complex. Involved in pre-tRNA splicing, probably by affecting the interaction of pre-tRNA with splicing endonuclease. The protein is Exportin-T (los1) of Botryotinia fuckeliana (strain B05.10) (Noble rot fungus).